The chain runs to 380 residues: Ribosomal RNA large subunit methyltransferase F (380 aa).

Disordered regions lie at residues 1–54 and 260–279; these read MSHK…PRNA and SQVM…ATDK. Residues 21 to 32 are compositionally biased toward low complexity; sequence QRQVVSKSSLQK. Basic residues predominate over residues 44-53; the sequence is QKSKALHPRN. Over residues 260–270 the composition is skewed to low complexity; it reads SQVMSPQVQPS.

This sequence belongs to the methyltransferase superfamily. METTL16/RlmF family.

It localises to the cytoplasm. The enzyme catalyses adenosine(1618) in 23S rRNA + S-adenosyl-L-methionine = N(6)-methyladenosine(1618) in 23S rRNA + S-adenosyl-L-homocysteine + H(+). Specifically methylates the adenine in position 1618 of 23S rRNA. The polypeptide is Ribosomal RNA large subunit methyltransferase F (Shewanella pealeana (strain ATCC 700345 / ANG-SQ1)).